The following is a 216-amino-acid chain: Leucyl/phenylalanyl-tRNA--protein transferase (216 aa).

The protein belongs to the L/F-transferase family.

It localises to the cytoplasm. The catalysed reaction is N-terminal L-lysyl-[protein] + L-leucyl-tRNA(Leu) = N-terminal L-leucyl-L-lysyl-[protein] + tRNA(Leu) + H(+). The enzyme catalyses N-terminal L-arginyl-[protein] + L-leucyl-tRNA(Leu) = N-terminal L-leucyl-L-arginyl-[protein] + tRNA(Leu) + H(+). It catalyses the reaction L-phenylalanyl-tRNA(Phe) + an N-terminal L-alpha-aminoacyl-[protein] = an N-terminal L-phenylalanyl-L-alpha-aminoacyl-[protein] + tRNA(Phe). In terms of biological role, functions in the N-end rule pathway of protein degradation where it conjugates Leu, Phe and, less efficiently, Met from aminoacyl-tRNAs to the N-termini of proteins containing an N-terminal arginine or lysine. The protein is Leucyl/phenylalanyl-tRNA--protein transferase of Maricaulis maris (strain MCS10) (Caulobacter maris).